Reading from the N-terminus, the 382-residue chain is Nucleoprotein (382 aa).

Disordered stretches follow at residues 1–29 and 150–240; these read MANQ…RKNN and QLEV…WKRT. Ser-9 is modified (phosphoserine; by host). The span at 17–27 shows a compositional bias: basic residues; the sequence is TRGRSNSRGRK. Residues 31-153 form the CoV N NTD domain; sequence IPLSFFNPIT…KVPGEFQLEV (123 aa). The segment at 33 to 159 is RNA-binding; it reads LSFFNPITLQ…QLEVNQSRDN (127 aa). The span at 154–163 shows a compositional bias: low complexity; it reads NQSRDNSRSR. Ser-156 carries the phosphoserine; by host modification. Residues 164–176 are compositionally biased toward basic residues; the sequence is SQSRSRSRNRSQS. Over residues 201–235 the composition is skewed to basic and acidic residues; that stretch reads LGVDTEKQQQRSRSKSKERSNSKTRDTTPKNENKH. The CoV N CTD domain occupies 224-337; sequence TRDTTPKNEN…AYARPSEVAK (114 aa). The dimerization stretch occupies residues 231 to 334; that stretch reads NENKHTWKRT…QINAYARPSE (104 aa). Residues Ser-254 and Ser-256 each carry the phosphoserine; by host modification. The segment at 328–358 is disordered; the sequence is AYARPSEVAKEQRKRKSRSKSAERSEQDVVP.

Belongs to the alphacoronavirus nucleocapsid protein family. Homooligomer. Both monomeric and oligomeric forms interact with RNA. Interacts with protein M. Interacts with NSP3; this interaction serves to tether the genome to the newly translated replicase-transcriptase complex at a very early stage of infection. ADP-ribosylated. The ADP-ribosylation is retained in the virion during infection. In terms of processing, phosphorylated on serine and threonine residues.

It is found in the virion. It localises to the host endoplasmic reticulum-Golgi intermediate compartment. Its subcellular location is the host Golgi apparatus. Its function is as follows. Packages the positive strand viral genome RNA into a helical ribonucleocapsid (RNP) and plays a fundamental role during virion assembly through its interactions with the viral genome and membrane protein M. Plays an important role in enhancing the efficiency of subgenomic viral RNA transcription as well as viral replication. This chain is Nucleoprotein, found in Sus scrofa (Pig).